The following is a 593-amino-acid chain: A-type ATP synthase subunit A (593 aa).

ATP is bound at residue G236 to T243.

This sequence belongs to the ATPase alpha/beta chains family. Has multiple subunits with at least A(3), B(3), C, D, E, F, H, I and proteolipid K(x).

It is found in the cell membrane. It catalyses the reaction ATP + H2O + 4 H(+)(in) = ADP + phosphate + 5 H(+)(out). In terms of biological role, component of the A-type ATP synthase that produces ATP from ADP in the presence of a proton gradient across the membrane. The A chain is the catalytic subunit. This chain is A-type ATP synthase subunit A, found in Pyrobaculum arsenaticum (strain DSM 13514 / JCM 11321 / PZ6).